Here is an 876-residue protein sequence, read N- to C-terminus: Leucine--tRNA ligase (876 aa).

Residues 42–52 (PYPSGKLHMGH) carry the 'HIGH' region motif. The short motif at 634-638 (KMSKS) is the 'KMSKS' region element. Lys-637 lines the ATP pocket.

This sequence belongs to the class-I aminoacyl-tRNA synthetase family.

Its subcellular location is the cytoplasm. The catalysed reaction is tRNA(Leu) + L-leucine + ATP = L-leucyl-tRNA(Leu) + AMP + diphosphate. The protein is Leucine--tRNA ligase of Neisseria gonorrhoeae (strain ATCC 700825 / FA 1090).